The following is a 334-amino-acid chain: Biotin synthase (334 aa).

The Radical SAM core domain maps to Glu-55–Arg-280. Residues Cys-70, Cys-74, and Cys-77 each contribute to the [4Fe-4S] cluster site. Residues Cys-113, Cys-205, and Arg-275 each coordinate [2Fe-2S] cluster.

This sequence belongs to the radical SAM superfamily. Biotin synthase family. Homodimer. [4Fe-4S] cluster serves as cofactor. Requires [2Fe-2S] cluster as cofactor.

The enzyme catalyses (4R,5S)-dethiobiotin + (sulfur carrier)-SH + 2 reduced [2Fe-2S]-[ferredoxin] + 2 S-adenosyl-L-methionine = (sulfur carrier)-H + biotin + 2 5'-deoxyadenosine + 2 L-methionine + 2 oxidized [2Fe-2S]-[ferredoxin]. It functions in the pathway cofactor biosynthesis; biotin biosynthesis; biotin from 7,8-diaminononanoate: step 2/2. Its function is as follows. Catalyzes the conversion of dethiobiotin (DTB) to biotin by the insertion of a sulfur atom into dethiobiotin via a radical-based mechanism. In Corynebacterium glutamicum (strain ATCC 13032 / DSM 20300 / JCM 1318 / BCRC 11384 / CCUG 27702 / LMG 3730 / NBRC 12168 / NCIMB 10025 / NRRL B-2784 / 534), this protein is Biotin synthase.